The following is a 663-amino-acid chain: Chaperone protein HtpG (663 aa).

The a; substrate-binding stretch occupies residues 1-352 (MTKQTLSFQA…SADLPLNVSR (352 aa)). Residues 218 to 228 (ELINPSDEKGG) show a composition bias toward basic and acidic residues. The disordered stretch occupies residues 218–237 (ELINPSDEKGGRQPGGMVKT). Residues 353–595 (ELLQESRDVK…DHGMSTQLAR (243 aa)) are b. The interval 596–663 (MLKQAGQAAP…YVKRVNALLV (68 aa)) is c.

It belongs to the heat shock protein 90 family. Homodimer.

Its subcellular location is the cytoplasm. Its function is as follows. Molecular chaperone. Has ATPase activity. The sequence is that of Chaperone protein HtpG from Albidiferax ferrireducens (strain ATCC BAA-621 / DSM 15236 / T118) (Rhodoferax ferrireducens).